Reading from the N-terminus, the 470-residue chain is Putative F-box/LRR-repeat protein At3g58920 (470 aa).

The 53-residue stretch at 1–53 (MDRISNLPNEIICHIVSFLSAKEAAFASVLSKRWQNLFTIVQKLEFDDSVKNQ) folds into the F-box domain. LRR repeat units lie at residues 114 to 142 (KLEI…KLTS), 143 to 170 (CIFA…FLKS), 173 to 198 (FSDL…TIYD), 225 to 250 (FTYF…KYID), 287 to 312 (EDDP…HLST), and 342 to 367 (YECF…MIKG).

This is Putative F-box/LRR-repeat protein At3g58920 from Arabidopsis thaliana (Mouse-ear cress).